The primary structure comprises 384 residues: BarH-like 2 homeobox protein (384 aa).

Disordered stretches follow at residues 1–134 (MTAM…APRT), 154–235 (CAPY…ARTA), and 364–384 (PGGQ…PHPR). 2 stretches are compositionally biased toward low complexity: residues 101–110 (VPAQSLQPSP) and 119–134 (QSAA…APRT). A compositionally biased stretch (polar residues) spans 157–175 (YSTSVSSPHHTPKQESNAA). The segment covering 177 to 217 (ESFRPKLEQEDGKTKLDKREDPQSDIKCHGTKEEGDREITS) has biased composition (basic and acidic residues). Positions 229 to 288 (PRKARTAFSDHQLNQLERSFERQKYLSVQDRMDLAAALNLTDTQVKTWYQNRRTKWKRQT) form a DNA-binding region, homeobox.

Belongs to the BAR homeobox family.

The protein resides in the nucleus. In terms of biological role, potential regulator of neural basic helix-loop-helix genes. It may down-regulate expression of ASCL1 and, within the thalamus, up-regulate NGN2, thereby regulating distinct patterns of neuronal differentiation. The sequence is that of BarH-like 2 homeobox protein (Barhl2) from Mus musculus (Mouse).